The following is a 223-amino-acid chain: Phosphoenolpyruvate guanylyltransferase (223 aa).

Phosphoenolpyruvate is bound by residues Thr-140, Gly-156, and Ser-159.

It belongs to the CofC family.

The catalysed reaction is phosphoenolpyruvate + GTP + H(+) = enolpyruvoyl-2-diphospho-5'-guanosine + diphosphate. It functions in the pathway cofactor biosynthesis; coenzyme F420 biosynthesis. Its function is as follows. Guanylyltransferase that catalyzes the activation of phosphoenolpyruvate (PEP) as enolpyruvoyl-2-diphospho-5'-guanosine, via the condensation of PEP with GTP. It is involved in the biosynthesis of coenzyme F420, a hydride carrier cofactor. The chain is Phosphoenolpyruvate guanylyltransferase from Conexibacter woesei (strain DSM 14684 / CCUG 47730 / CIP 108061 / JCM 11494 / NBRC 100937 / ID131577).